The chain runs to 131 residues: Prefoldin subunit beta (131 aa).

2 disordered regions span residues 19–41 (LQETAQQVAQQKQQAETQLRESE) and 112–131 (LQGGAGGGPMGPGGPGAGGA). Residues 20-35 (QETAQQVAQQKQQAET) show a composition bias toward low complexity. Residues 114–131 (GGAGGGPMGPGGPGAGGA) show a composition bias toward gly residues.

Belongs to the prefoldin subunit beta family. In terms of assembly, heterohexamer of two alpha and four beta subunits.

It localises to the cytoplasm. Its function is as follows. Molecular chaperone capable of stabilizing a range of proteins. Seems to fulfill an ATP-independent, HSP70-like function in archaeal de novo protein folding. This Natronomonas pharaonis (strain ATCC 35678 / DSM 2160 / CIP 103997 / JCM 8858 / NBRC 14720 / NCIMB 2260 / Gabara) (Halobacterium pharaonis) protein is Prefoldin subunit beta.